The following is a 537-amino-acid chain: Tyrosine-protein kinase Fyn (537 aa).

Residue glycine 2 is the site of N-myristoyl glycine attachment. Residues cysteine 3 and cysteine 6 are each lipidated (S-palmitoyl cysteine). Threonine 12 carries the post-translational modification Phosphothreonine; by PKC. The SH3 domain occupies threonine 82–serine 143. Residues tryptophan 149 to cysteine 246 enclose the SH2 domain. The Protein kinase domain maps to leucine 271–phenylalanine 524. ATP is bound by residues leucine 277 to valine 285 and lysine 299. The active-site Proton acceptor is the aspartate 390. The residue at position 420 (tyrosine 420) is a Phosphotyrosine; by autocatalysis. Tyrosine 531 carries the phosphotyrosine modification.

The protein belongs to the protein kinase superfamily. Tyr protein kinase family. SRC subfamily. Associates through its SH3 domain, to the p85 subunit of phosphatidylinositol 3-kinase. It depends on Mn(2+) as a cofactor.

The catalysed reaction is L-tyrosyl-[protein] + ATP = O-phospho-L-tyrosyl-[protein] + ADP + H(+). Its activity is regulated as follows. Inhibited by phosphorylation of Tyr-531 by leukocyte common antigen and activated by dephosphorylation of this site. In terms of biological role, tyrosine-protein kinase implicated in the control of cell growth. Plays a role in the regulation of intracellular calcium levels. Required in brain development and mature brain function with important roles in the regulation of axon growth, axon guidance, and neurite extension. Blocks axon outgrowth and attraction induced by ntn1 by phosphorylating its receptor ddc. This is Tyrosine-protein kinase Fyn (fyn) from Xenopus laevis (African clawed frog).